Reading from the N-terminus, the 227-residue chain is Uracil-DNA glycosylase (227 aa).

Asp65 functions as the Proton acceptor in the catalytic mechanism.

The protein belongs to the uracil-DNA glycosylase (UDG) superfamily. UNG family.

It localises to the cytoplasm. The catalysed reaction is Hydrolyzes single-stranded DNA or mismatched double-stranded DNA and polynucleotides, releasing free uracil.. In terms of biological role, excises uracil residues from the DNA which can arise as a result of misincorporation of dUMP residues by DNA polymerase or due to deamination of cytosine. This chain is Uracil-DNA glycosylase, found in Buchnera aphidicola subsp. Cinara cedri (strain Cc).